We begin with the raw amino-acid sequence, 390 residues long: Protein snail (390 aa).

Residues 1-20 are SNAG domain; the sequence is MAANYKSCPLKKRPIVFVEE. Disordered stretches follow at residues 29–65 and 162–191; these read ALTK…PKRD and QSVY…DLSV. Polar residues-rich tracts occupy residues 32–43 and 162–172; these read KDSQFAQDQPQD and QSVYSYQQMTP. 5 consecutive C2H2-type zinc fingers follow at residues 245 to 267, 280 to 302, 306 to 328, 334 to 356, and 362 to 385; these read FKCD…RQFH, HSCE…IRTH, CKCP…IRTH, FQCP…QQTH, and YACQ…SSNC.

It belongs to the snail C2H2-type zinc-finger protein family.

It is found in the nucleus. Its function is as follows. Essential for the correct specification of ventral-dorsal patterns. This chain is Protein snail (sna), found in Drosophila melanogaster (Fruit fly).